The following is an 86-amino-acid chain: Small ribosomal subunit protein bS18c (86 aa).

The protein belongs to the bacterial ribosomal protein bS18 family. As to quaternary structure, part of the 30S ribosomal subunit.

The protein resides in the plastid. The protein localises to the chloroplast. In Pseudotsuga menziesii (Douglas-fir), this protein is Small ribosomal subunit protein bS18c.